The chain runs to 904 residues: MAESSESFTMASSPAQRRRGNDPLTSSPGRSSRRTDALTSSPGRDLPPFEDESEGLLGTEGPLEEEEDGEELIGDGMERDYRAIPELDAYEAEGLALDDEDVEELTASQREAAERAMRQRDREAGRGLGRMRRGLLYDSDEEDEERPARKRRQVERATEDGEEDEEMIESIENLEDLKGHSVREWVSMAGPRLEIHHRFKNFLRTHVDSHGHNVFKERISDMCKENRESLVVNYEDLAAREHVLAYFLPEAPAELLQIFDEAALEVVLAMYPKYDRITNHIHVRISHLPLVEELRSLRQLHLNQLIRTSGVVTSCTGVLPQLSMVKYNCNKCNFVLGPFCQSQNQEVKPGSCPECQSAGPFEVNMEETIYQNYQRIRIQESPGKVAAGRLPRSKDAILLADLVDSCKPGDEIELTGIYHNNYDGSLNTANGFPVFATVILANHVAKKDNKVAVGELTDEDVKMITSLSKDQQIGEKIFASIAPSIYGHEDIKRGLALALFGGEPKNPGGKHKVRGDINVLLCGDPGTAKSQFLKYIEKVSSRAIFTTGQGASAVGLTAYVQRHPVSREWTLEAGALVLADRGVCLIDEFDKMNDQDRTSIHEAMEQQSISISKAGIVTSLQARCTVIAAANPIGGRYDPSLTFSENVDLTEPIISRFDILCVVRDTVDPVQDEMLARFVVGSHVRHHPSNKEEEGLANGSAAEPAMPNTYGVEPLPQEVLKKYIIYAKERVHPKLNQMDQDKVAKMYSDLRKESMATGSIPITVRHIESMIRMAEAHARIHLRDYVIEDDVNMAIRVMLESFIDTQKFSVMRSMRKTFARYLSFRRDNNELLLFILKQLVAEQVTYQRNRFGAQQDTIEVPEKDLVDKARQINIHNLSAFYDSELFRMNKFSHDLKRKMILQQF.

Positions 1 to 15 (MAESSESFTMASSPA) are enriched in polar residues. Residues 1 to 80 (MAESSESFTM…ELIGDGMERD (80 aa)) form a disordered region. A2 carries the post-translational modification N-acetylalanine. The tract at residues 2–257 (AESSESFTMA…LPEAPAELLQ (256 aa)) is interaction with KAT7. Residues S12 and S13 each carry the phosphoserine modification. A Phosphothreonine modification is found at T25. Residues S26, S27, and S32 each carry the phosphoserine modification. T39 is modified (phosphothreonine). Position 40 is a phosphoserine; by CDC7 (S40). At S41 the chain carries Phosphoserine. S53 is modified (phosphoserine; by CDC7). A Phosphothreonine modification is found at T59. Positions 61 to 130 (GPLEEEEDGE…DREAGRGLGR (70 aa)) are interaction with DNJC9. Positions 62–73 (PLEEEEDGEELI) are enriched in acidic residues. S108 bears the Phosphoserine; by ATR mark. The segment at 109-167 (QREAAERAMRQRDREAGRGLGRMRRGLLYDSDEEDEERPARKRRQVERATEDGEEDEEM) is disordered. The segment covering 111-125 (EAAERAMRQRDREAG) has biased composition (basic and acidic residues). Y137 is modified (phosphotyrosine). At S139 the chain carries Phosphoserine. A Glycyl lysine isopeptide (Lys-Gly) (interchain with G-Cter in SUMO2) cross-link involves residue K178. K216 carries the N6-acetyllysine modification. The C4-type zinc-finger motif lies at 329 to 355 (CNKCNFVLGPFCQSQNQEVKPGSCPEC). A phosphoserine mark is found at S381 and S484. One can recognise an MCM domain in the interval 473–679 (IGEKIFASIA…VQDEMLARFV (207 aa)). Positions 530 and 531 each coordinate ADP. Positions 655 to 658 (SRFD) match the Arginine finger motif. The tract at residues 686 to 705 (HHPSNKEEEGLANGSAAEPA) is disordered.

It belongs to the MCM family. Component of the MCM2-7 complex. The complex forms a toroidal hexameric ring with the proposed subunit order MCM2-MCM6-MCM4-MCM7-MCM3-MCM5. Component of the CMG helicase complex, a hexameric ring of related MCM2-7 subunits stabilized by CDC45 and the tetrameric GINS complex. Interacts with DBF4. Interacts with KAT7. May interact with MCM10. Component of the replisome complex composed of at least DONSON, MCM2, MCM7, PCNA and TICRR. Forms a co-chaperone complex with DNAJC9 and histone H3.3-H4 heterodimers. Within the complex, interacts (via N-terminus) with DNAJC9 (via C-terminus); the interaction is histone-dependent. Interacts with histones H3.1 and H3.3. Interacts with AGER/RAGE; the interaction is increased following DNA replication stress and stabilizes the MCM2-7 complex at replication forks. In terms of processing, phosphorylated on Ser-108 by ATR in proliferating cells. Ser-108 proliferation is increased by genotoxic agents. Ser-40 is mediated by the CDC7-DBF4 and CDC7-DBF4B complexes, while Ser-53 phosphorylation is only mediated by the CDC7-DBF4 complex. Phosphorylation by the CDC7-DBF4 complex during G1/S phase is required for the initiation of DNA replication.

The protein localises to the nucleus. The protein resides in the chromosome. It catalyses the reaction ATP + H2O = ADP + phosphate + H(+). Acts as a component of the MCM2-7 complex (MCM complex) which is the replicative helicase essential for 'once per cell cycle' DNA replication initiation and elongation in eukaryotic cells. Core component of CDC45-MCM-GINS (CMG) helicase, the molecular machine that unwinds template DNA during replication, and around which the replisome is built. The active ATPase sites in the MCM2-7 ring are formed through the interaction surfaces of two neighboring subunits such that a critical structure of a conserved arginine finger motif is provided in trans relative to the ATP-binding site of the Walker A box of the adjacent subunit. The six ATPase active sites, however, are likely to contribute differentially to the complex helicase activity. Required for the entry in S phase and for cell division. Plays a role in terminally differentiated hair cells development of the cochlea and induces cells apoptosis. This is DNA replication licensing factor MCM2 from Homo sapiens (Human).